The sequence spans 95 residues: MKIYFIVGLLFMAMVAIMAAPVEDEFEPLEHFENEERADRHRRVTCDLLSFKGQVNDSACAANCLSLGKAGGHCEKGVCICRKTSFKDLWDKRFG.

Residues 1–19 (MKIYFIVGLLFMAMVAIMA) form the signal peptide. Residues 20 to 43 (APVEDEFEPLEHFENEERADRHRR) constitute a propeptide that is removed on maturation. 3 disulfide bridges follow: Cys-46/Cys-74, Cys-60/Cys-79, and Cys-64/Cys-81. Phe-94 is subject to Phenylalanine amide.

Its subcellular location is the secreted. Its function is as follows. Found in royal jelly and in hemolymph, potent antibacterial protein against Gram-positive bacteria at low concentration. This chain is Defensin-1, found in Apis mellifera carnica (Carniolan honeybee).